Reading from the N-terminus, the 249-residue chain is MPFEIVFEGAKEFAQLIETASRLIDEAAFKVTEEGISMRAMDPSRVVLIDLNLPSSIFSKYEVDGEETIGVNMDHLKKVLKRGKAKDTLILRKGEENFLEISLQGTATRTFRLPLIDVEEIEVELPDLPYTAKVVVLGEVLKEAVKDASLVSDSIKFMAKENEFIMRAEGETQEVEVKLTLEDEGLLDIEVQEETKSAYGVSYLADMVKGIGKADEVTMRFGNEMPMQMEYYIRDEGRLTFLLAPRVEE.

This sequence belongs to the PCNA family. As to quaternary structure, homotrimer. The subunits circularize to form a toroid; DNA passes through its center. Replication factor C (RFC) is required to load the toroid on the DNA.

Functionally, sliding clamp subunit that acts as a moving platform for DNA processing. Responsible for tethering the catalytic subunit of DNA polymerase and other proteins to DNA during high-speed replication. In Pyrococcus horikoshii (strain ATCC 700860 / DSM 12428 / JCM 9974 / NBRC 100139 / OT-3), this protein is DNA polymerase sliding clamp.